Reading from the N-terminus, the 283-residue chain is Lectin subunit alpha (283 aa).

The first 23 residues, 1–23, serve as a signal peptide directing secretion; the sequence is MSLTMKNVEGFVIFLVIFTSTAA. Residues 51–159 enclose the C-type lectin domain; it reads HECARHDQQL…NVKMGYICEP (109 aa). 2 cysteine pairs are disulfide-bonded: Cys-53/Cys-157 and Cys-132/Cys-149.

Functionally, role in the defense system of the organism against microorganisms. This lectin binds galactose. This Sarcophaga peregrina (Flesh fly) protein is Lectin subunit alpha.